The sequence spans 648 residues: Macrolide export ATP-binding/permease protein MacB (648 aa).

Positions 5 to 243 constitute an ABC transporter domain; that stretch reads LELKDIRRSY…TGGTEPVVNT (239 aa). 41–48 serves as a coordination point for ATP; it reads GASGSGKS. A run of 4 helical transmembrane segments spans residues 273–293, 523–543, 576–596, and 611–631; these read LLTM…VVVG, LFLT…VMNI, AVLV…LIAF, and PLAL…FGWL.

This sequence belongs to the ABC transporter superfamily. Macrolide exporter (TC 3.A.1.122) family. As to quaternary structure, homodimer. Part of the tripartite efflux system MacAB-TolC, which is composed of an inner membrane transporter, MacB, a periplasmic membrane fusion protein, MacA, and an outer membrane component, TolC. The complex forms a large protein conduit and can translocate molecules across both the inner and outer membranes. Interacts with MacA.

The protein localises to the cell inner membrane. Its function is as follows. Part of the tripartite efflux system MacAB-TolC. MacB is a non-canonical ABC transporter that contains transmembrane domains (TMD), which form a pore in the inner membrane, and an ATP-binding domain (NBD), which is responsible for energy generation. Confers resistance against macrolides. The polypeptide is Macrolide export ATP-binding/permease protein MacB (Escherichia coli O6:K15:H31 (strain 536 / UPEC)).